The chain runs to 122 residues: Large ribosomal subunit protein uL14c (122 aa).

This sequence belongs to the universal ribosomal protein uL14 family. As to quaternary structure, part of the 50S ribosomal subunit.

It localises to the plastid. The protein resides in the chloroplast. Its function is as follows. Binds to 23S rRNA. This is Large ribosomal subunit protein uL14c from Gracilaria tenuistipitata var. liui (Red alga).